Consider the following 335-residue polypeptide: Cytoskeleton protein RodZ (335 aa).

Residues 1-111 (MNTEATHDQN…LGKRRKKRDG (111 aa)) are Cytoplasmic-facing. One can recognise an HTH cro/C1-type domain in the interval 19–71 (LRNAREQLGLSQQAVAERLCLKVSTVRDIEEDKAPADLASTFLRGYIRSYARL). Positions 30–49 (QQAVAERLCLKVSTVRDIEE) form a DNA-binding region, H-T-H motif. A helical; Signal-anchor for type II membrane protein membrane pass occupies residues 112–132 (WLMTFTWLVLFVVIGLSGAWW). At 133-335 (WQDHKAQQEE…TLNAEQSPAQ (203 aa)) the chain is on the periplasmic side. Over residues 148–164 (DQSSAELNNNQSQSVPL) the composition is skewed to polar residues. The disordered stretch occupies residues 148 to 244 (DQSSAELNNN…PLPTDQAGVT (97 aa)). Low complexity-rich tracts occupy residues 165-205 (DTST…DPQQ) and 217-239 (DTAA…LPTD).

It belongs to the RodZ family.

Its subcellular location is the cell inner membrane. Cytoskeletal protein that is involved in cell-shape control through regulation of the length of the long axis. This chain is Cytoskeleton protein RodZ, found in Escherichia coli O6:H1 (strain CFT073 / ATCC 700928 / UPEC).